Consider the following 397-residue polypeptide: Purine ribonucleoside efflux pump NepI (397 aa).

Topologically, residues 1-21 (MNENIAEKFRADGVARPNWSA) are cytoplasmic. A helical membrane pass occupies residues 22-42 (VFAVAFCVACLITVEFLPVSL). At 43-54 (LTPMAQDLGISE) the chain is on the periplasmic side. A helical membrane pass occupies residues 55-75 (GVAGQSVTVTAFVAMFSSLFI). Over 76-85 (TQIIQATDRR) the chain is Cytoplasmic. The chain crosses the membrane as a helical span at residues 86 to 106 (YIVILFAVLLTASCLMVSFAN). A topological domain (periplasmic) is located at residue serine 107. A helical transmembrane segment spans residues 108 to 128 (FTLLLLGRACLGLALGGFWAM). Residues 129–147 (SASLTMRLVPARTVPKALS) are Cytoplasmic-facing. Residues 148-168 (VIFGAVSIALVIAAPLGSFLG) traverse the membrane as a helical segment. The Periplasmic segment spans residues 169 to 175 (GIIGWRN). Residues 176-196 (VFNAAAVMGVLCVIWVVKSLP) traverse the membrane as a helical segment. Topologically, residues 197–215 (SLPGEPSHQKQNMFSLLQR) are cytoplasmic. The helical transmembrane segment at 216–236 (PGVMAGMIAIFMSFAGQFAFF) threads the bilayer. The Periplasmic segment spans residues 237–255 (TYIRPVYMNLAGFDVDGLT). A helical transmembrane segment spans residues 256-276 (LVLLSFGIASFVGTSFSSYVL). Over 277-281 (KRSVK) the chain is Cytoplasmic. A helical membrane pass occupies residues 282 to 302 (LALAGAPLLLALSALTLIVWG). The Periplasmic portion of the chain corresponds to 303 to 305 (SDK). The chain crosses the membrane as a helical span at residues 306-326 (TVAAVIAIIWGLAFALVPVGW). The Cytoplasmic portion of the chain corresponds to 327-343 (STWITRSLADQAEKAGS). Residues 344-364 (IQVAVIQLANTCGAAVGGYAL) traverse the membrane as a helical segment. The Periplasmic portion of the chain corresponds to 365–366 (DN). The helical transmembrane segment at 367-387 (FGLLSPLALSGGLMLLTALVV) threads the bilayer. Residues 388-397 (AAKVRITPMS) lie on the Cytoplasmic side of the membrane.

The protein belongs to the major facilitator superfamily. DHA1 family. NepI (TC 2.A.1.2.26) subfamily.

The protein resides in the cell inner membrane. The enzyme catalyses inosine(in) + H(+)(out) = inosine(out) + H(+)(in). It catalyses the reaction guanosine(in) + H(+)(out) = guanosine(out) + H(+)(in). Involved in the efflux of purine ribonucleosides, such as inosine and guanosine. The sequence is that of Purine ribonucleoside efflux pump NepI from Salmonella paratyphi B (strain ATCC BAA-1250 / SPB7).